We begin with the raw amino-acid sequence, 131 residues long: UPF0146 protein PH0209 (131 aa).

It belongs to the UPF0146 family.

In Pyrococcus horikoshii (strain ATCC 700860 / DSM 12428 / JCM 9974 / NBRC 100139 / OT-3), this protein is UPF0146 protein PH0209.